The primary structure comprises 335 residues: Syntaxin-18 (335 aa).

The Cytoplasmic portion of the chain corresponds to 1-309 (MAVDITLLFR…EDIREAIKNN (309 aa)). Basic and acidic residues-rich tracts occupy residues 168-182 (KLEP…ESTS) and 192-208 (KDSE…EKIL). Positions 168-226 (KLEPEPNTKTRESTSSEKVSQSPSKDSEENPATEERPEKILAETQPELGTWGDGKGEDE) are disordered. The 63-residue stretch at 243-305 (IGEMNSLFDE…KEGNEDIREA (63 aa)) folds into the t-SNARE coiled-coil homology domain. The helical; Anchor for type IV membrane protein transmembrane segment at 310-330 (AGFRVWILFFLVMCSFSLLFL) threads the bilayer. Residues 331 to 335 (DWYDS) are Vesicular-facing.

This sequence belongs to the syntaxin family. As to quaternary structure, component of a SNARE complex consisting of STX18, USE1L, BNIP1/SEC20L, and SEC22B. RINT1/TIP20L and ZW10 are associated with the complex through interaction with BNIP1/SEC20L. Interacts directly with USE1L and BNIP1/SEC20L. In terms of tissue distribution, ubiquitous.

Its subcellular location is the endoplasmic reticulum membrane. It is found in the golgi apparatus membrane. Its function is as follows. Syntaxin that may be involved in targeting and fusion of Golgi-derived retrograde transport vesicles with the ER. The chain is Syntaxin-18 (STX18) from Homo sapiens (Human).